The following is a 497-amino-acid chain: Glycine receptor subunit beta (497 aa).

A signal peptide spans 1–22 (MKFLLTTAFLILISLWVEEAYS). Residues 23 to 268 (KEKSSKKGKG…IFTLRRQVGF (246 aa)) lie on the Extracellular side of the membrane. Asn54 carries an N-linked (GlcNAc...) asparagine glycan. Residues Arg108 and Ser174 each coordinate glycine. Cys183 and Cys197 form a disulfide bridge. The N-linked (GlcNAc...) asparagine glycan is linked to Asn242. An intrachain disulfide couples Cys243 to Cys255. Position 250 (Thr250) interacts with glycine. A helical transmembrane segment spans residues 269 to 289 (YMMGVYAPTLLIVVLSWLSFW). Over 290–294 (INPDA) the chain is Cytoplasmic. The helical transmembrane segment at 295 to 315 (SAARVPLGIFSVLSLASECTT) threads the bilayer. The Extracellular portion of the chain corresponds to 316 to 327 (LAAELPKVSYVK). The helical transmembrane segment at 328–349 (ALDVWLIACLLFGFASLVEYAV) threads the bilayer. At 350 to 472 (VQVMLNNPKR…KPVIPTAAKR (123 aa)) the chain is on the cytoplasmic side. Thr391 is modified (phosphothreonine). A helical transmembrane segment spans residues 473-496 (IDLYARALFPFCFLFFNVIYWSIY).

This sequence belongs to the ligand-gated ion channel (TC 1.A.9) family. Glycine receptor (TC 1.A.9.3) subfamily. GLRB sub-subfamily. As to quaternary structure, forms heteropentamers with glycin receptor alpha subunits. Heteropentamers with GLRA1 can be composed of two GLRA1 and three GLRB subunits, or three GLRA1 and two GLRB subunits, or four GLRA1 subunits and one GLRB subunit. Forms heteropentamers with GLRA2. Functional GLRB-GLRA2 heteropentamers contain four GLRA2 subunits and one GLRB subunit, although alternative subunit composition cannot be excluded. Forms a heteropentamer with GLRA3. Interacts with GPHN.

Its subcellular location is the postsynaptic cell membrane. The protein resides in the synapse. The protein localises to the cell projection. It localises to the dendrite. It is found in the cell membrane. Its subcellular location is the cytoplasm. It carries out the reaction chloride(in) = chloride(out). With respect to regulation, channel opening is triggered by extracellular glycine. Heteropentameric channels composed of GLRB and GLRA1 are activated by lower glycine levels than homopentameric GLRA1. In terms of biological role, subunit of heteromeric glycine-gated chloride channels. Plays an important role in the down-regulation of neuronal excitability. Contributes to the generation of inhibitory postsynaptic currents. This is Glycine receptor subunit beta (GLRB) from Homo sapiens (Human).